Here is a 124-residue protein sequence, read N- to C-terminus: Small ribosomal subunit protein uS12 (124 aa).

At D89 the chain carries 3-methylthioaspartic acid. Positions 104–124 (TAGVKDRRQSRSKYGAKTPKE) are disordered.

The protein belongs to the universal ribosomal protein uS12 family. Part of the 30S ribosomal subunit. Contacts proteins S8 and S17. May interact with IF1 in the 30S initiation complex.

Functionally, with S4 and S5 plays an important role in translational accuracy. In terms of biological role, interacts with and stabilizes bases of the 16S rRNA that are involved in tRNA selection in the A site and with the mRNA backbone. Located at the interface of the 30S and 50S subunits, it traverses the body of the 30S subunit contacting proteins on the other side and probably holding the rRNA structure together. The combined cluster of proteins S8, S12 and S17 appears to hold together the shoulder and platform of the 30S subunit. This Parasynechococcus marenigrum (strain WH8102) protein is Small ribosomal subunit protein uS12.